A 416-amino-acid polypeptide reads, in one-letter code: Multifunctional CCA protein (416 aa).

ATP is bound by residues Gly8 and Arg11. Gly8 and Arg11 together coordinate CTP. Mg(2+) is bound by residues Asp21 and Asp23. ATP is bound by residues Arg91, Arg137, and Arg140. Residues Arg91, Arg137, and Arg140 each coordinate CTP. In terms of domain architecture, HD spans Thr228 to Trp329.

It belongs to the tRNA nucleotidyltransferase/poly(A) polymerase family. Bacterial CCA-adding enzyme type 1 subfamily. Monomer. Can also form homodimers and oligomers. The cofactor is Mg(2+). It depends on Ni(2+) as a cofactor.

The catalysed reaction is a tRNA precursor + 2 CTP + ATP = a tRNA with a 3' CCA end + 3 diphosphate. The enzyme catalyses a tRNA with a 3' CCA end + 2 CTP + ATP = a tRNA with a 3' CCACCA end + 3 diphosphate. In terms of biological role, catalyzes the addition and repair of the essential 3'-terminal CCA sequence in tRNAs without using a nucleic acid template. Adds these three nucleotides in the order of C, C, and A to the tRNA nucleotide-73, using CTP and ATP as substrates and producing inorganic pyrophosphate. tRNA 3'-terminal CCA addition is required both for tRNA processing and repair. Also involved in tRNA surveillance by mediating tandem CCA addition to generate a CCACCA at the 3' terminus of unstable tRNAs. While stable tRNAs receive only 3'-terminal CCA, unstable tRNAs are marked with CCACCA and rapidly degraded. This is Multifunctional CCA protein from Shewanella baltica (strain OS185).